We begin with the raw amino-acid sequence, 478 residues long: Cytochrome P450 monooxygenase asqL (478 aa).

C407 provides a ligand contact to heme.

The protein belongs to the cytochrome P450 family. Heme is required as a cofactor.

The protein operates within secondary metabolite biosynthesis. It participates in alkaloid biosynthesis. Its pathway is mycotoxin biosynthesis. Functionally, cytochrome P450 monooxygenase; part of the gene cluster that mediates the biosynthesis of the aspoquinolone mycotoxins. The role of asqL within the aspoquinolone pathway has still to be determined. The first step of the pathway is catalyzed by the nonribosomal peptide synthetase asqK that condenses anthranilic acid and O-methyl-L-tyrosine to produce 4'-methoxycyclopeptin. 4'-methoxycyclopeptin is then converted to 4'-methoxydehydrocyclopeptin by the ketoglutarate-dependent dioxygenase asqJ. AsqJ also converts its first product 4'-methoxydehydrocyclopeptin to 4'-methoxycyclopenin. The following conversion of 4'-methoxycyclopenin into 4'-methoxyviridicatin is catalyzed by the cyclopenase asqI. 4'-methoxyviridicatin is the precursor of quinolone natural products, and is further converted to quinolinone B. The prenyltransferase asqH1 then catalyzes the canonical Friedel-Crafts alkylation of quinolinone B with dimethylallyl cation to yield dimethylallyl quinolone, which is subjected to FAD-dependent dehydrogenation by the FAD-linked oxidoreductase asqF to yield conjugated aryl diene. The delta(3') double bond then serves as the site of the second alkylation with DMAPP catalyzed by the prenyltransferase asqH2 to yield a carbenium ion intermediate, which can be attacked by H(2)O to yield a styrenyl quinolone containing a C3'-hydroxyprenyl chain. The FAD-dependent monooxygenase asqG performs epoxidation of the terminal C7'-C8' olefin. Finally, after dehydratation of the epoxide at C3 by asqC, the quinolone epoxide rearrangement protein asqO catalyzes an enzymatic 3-exo-tet cyclization to yield the cyclopropyl-THF ring system in aspoquinolone. The protein is Cytochrome P450 monooxygenase asqL of Emericella nidulans (strain FGSC A4 / ATCC 38163 / CBS 112.46 / NRRL 194 / M139) (Aspergillus nidulans).